Here is a 366-residue protein sequence, read N- to C-terminus: Flagellar P-ring protein (366 aa).

The N-terminal stretch at 1–20 (MVIKFLSALILLLVTTAVQA) is a signal peptide.

It belongs to the FlgI family. As to quaternary structure, the basal body constitutes a major portion of the flagellar organelle and consists of four rings (L,P,S, and M) mounted on a central rod.

The protein localises to the periplasm. It localises to the bacterial flagellum basal body. Its function is as follows. Assembles around the rod to form the L-ring and probably protects the motor/basal body from shearing forces during rotation. This is Flagellar P-ring protein from Escherichia coli O6:H1 (strain CFT073 / ATCC 700928 / UPEC).